The primary structure comprises 306 residues: Glutathione transport system permease protein GsiC (306 aa).

Residues 1-8 (MLNYFIKR) are Cytoplasmic-facing. A helical membrane pass occupies residues 9-29 (LLGLIPTLLIVMVLVFLFVHL). Topologically, residues 30-98 (LPGDPARLAA…QEIALRFMPT (69 aa)) are periplasmic. Residues 95-292 (FMPTFWLTVC…LEFILINLLV (198 aa)) enclose the ABC transmembrane type-1 domain. A helical transmembrane segment spans residues 99–119 (FWLTVCSMAWAVIFGMAIGIV). At 120–130 (SAVWRNGWPDR) the chain is on the cytoplasmic side. Residues 131 to 151 (IGMTLAVSGLSFPAFALGMLL) traverse the membrane as a helical segment. The Periplasmic portion of the chain corresponds to 152 to 168 (MQIFSVELGWLPTVGAD). Residues 169-189 (TWLHYILPSLTLGAAVAAVMA) form a helical membrane-spanning segment. Residues 190 to 228 (RFTRASFVDVLQEDYMRTARAKGVRESLVVLKHGLRNAL) lie on the Cytoplasmic side of the membrane. The helical transmembrane segment at 229 to 249 (IPVVTMMGLQFGFLLGGSIVV) threads the bilayer. Residues 250-278 (EKVFNWPGLGRLLVDSVEMRDYPVIQAEV) lie on the Periplasmic side of the membrane. The chain crosses the membrane as a helical span at residues 279–299 (LLFSLEFILINLLVDMLYAAI). Residues 300 to 306 (NPAIRYK) lie on the Cytoplasmic side of the membrane.

The protein belongs to the binding-protein-dependent transport system permease family. The complex is composed of two ATP-binding proteins (GsiA), two transmembrane proteins (GsiC and GsiD) and a solute-binding protein (GsiB).

Its subcellular location is the cell inner membrane. In terms of biological role, part of the ABC transporter complex GsiABCD involved in glutathione import. Probably responsible for the translocation of the substrate across the membrane. This Pectobacterium atrosepticum (strain SCRI 1043 / ATCC BAA-672) (Erwinia carotovora subsp. atroseptica) protein is Glutathione transport system permease protein GsiC.